We begin with the raw amino-acid sequence, 733 residues long: Ribosomal protein S6 kinase alpha-2 (733 aa).

The Protein kinase 1 domain occupies 59 to 318 (FELLKVLGQG…VEEIKRHPFF (260 aa)). ATP-binding positions include 65-73 (LGQGSYGKV) and Lys91. The active-site Proton acceptor is the Asp184. Ser218 is modified (phosphoserine; by PDPK1). The AGC-kinase C-terminal domain occupies 319-388 (VTIDWNKLYR…VASSLVQEPS (70 aa)). Position 377 is a phosphoserine (Ser377). The Protein kinase 2 domain occupies 415-672 (YEIKEDIGVG…AVQVLKHPWI (258 aa)). ATP contacts are provided by residues 421 to 429 (IGVGSYSVC) and Lys444. The active-site Proton acceptor is the Asp532.

It belongs to the protein kinase superfamily. AGC Ser/Thr protein kinase family. S6 kinase subfamily. Forms a complex with either MAPK1/ERK2 or MAPK3/ERK1 in quiescent cells. Transiently dissociates following mitogenic stimulation. Interacts with FBXO5; cooperate to induce the metaphase arrest of early blastomeres; increases and stabilizes interaction of FBXO5 with CDC20. It depends on Mg(2+) as a cofactor. Activated by phosphorylation at Ser-218 by PDPK1. Autophosphorylated on Ser-377, as part of the activation process. May be phosphorylated at Thr-356 and Ser-360 by MAPK1/ERK2 and MAPK3/ERK1. In terms of processing, N-terminal myristoylation results in an activated kinase in the absence of added growth factors.

The protein localises to the nucleus. The protein resides in the cytoplasm. It carries out the reaction L-seryl-[protein] + ATP = O-phospho-L-seryl-[protein] + ADP + H(+). It catalyses the reaction L-threonyl-[protein] + ATP = O-phospho-L-threonyl-[protein] + ADP + H(+). Upon extracellular signal or mitogen stimulation, phosphorylated at Thr-570 in the C-terminal kinase domain (CTKD) by MAPK1/ERK2 and MAPK3/ERK1. The activated CTKD then autophosphorylates Ser-377, allowing binding of PDPK1, which in turn phosphorylates Ser-218 in the N-terminal kinase domain (NTDK) leading to the full activation of the protein and subsequent phosphorylation of the substrates by the NTKD. Functionally, serine/threonine-protein kinase that acts downstream of ERK (MAPK1/ERK2 and MAPK3/ERK1) signaling and mediates mitogenic and stress-induced activation of transcription factors, regulates translation, and mediates cellular proliferation, survival, and differentiation. May function as tumor suppressor in epithelial ovarian cancer cells. The polypeptide is Ribosomal protein S6 kinase alpha-2 (Rps6ka2) (Mus musculus (Mouse)).